The chain runs to 452 residues: Flavanone 7-O-glucoside 2''-O-beta-L-rhamnosyltransferase (452 aa).

The Proton acceptor role is filled by His21. His21 contacts an anthocyanidin. Asp121 serves as the catalytic Charge relay. The helical transmembrane segment at 136 to 156 (IAAILFLPLSAVACSFLLHNI) threads the bilayer. 6 residues coordinate UDP-beta-L-rhamnose: Ser268, Val330, His347, Gly351, Ser352, and Glu355. The stretch at 407-436 (KHVVLQEEAKQIRRKANEISESMKKIGDAE) forms a coiled coil.

This sequence belongs to the UDP-glycosyltransferase family. Monomer. In terms of tissue distribution, expressed in young fruits and leaves.

It localises to the membrane. It carries out the reaction flavanone 7-O-beta-D-glucoside + UDP-beta-L-rhamnose = flavanone 7-O-[alpha-L-rhamnosyl-(1-&gt;2)-beta-D-glucoside] + UDP + H(+). Its function is as follows. Involved in the production of the bitter neohesperidosides in citrus. Shows a strict specificity for UDP-rhamnose as donor. The polypeptide is Flavanone 7-O-glucoside 2''-O-beta-L-rhamnosyltransferase (C12RT1) (Citrus maxima (Pomelo)).